Here is a 559-residue protein sequence, read N- to C-terminus: Endoglin (559 aa).

A signal peptide spans 1-20 (MKSICCVLVLCLLLCRRSTA). The Extracellular portion of the chain corresponds to 21–473 (SESICELKDV…SCFEFGLSAV (453 aa)). Disulfide bonds link Cys25–Cys201 and Cys47–Cys174. Asn55, Asn79, Asn109, Asn133, Asn170, Asn302, and Asn352 each carry an N-linked (GlcNAc...) asparagine glycan. A disulfide bridge connects residues Cys381 and Cys427. Residues 474–494 (LGIAFGGFLIGVLLTGALWFI) traverse the membrane as a helical segment. Residues 495–559 (KIRTGHPVAL…TQSTPTSSMA (65 aa)) are Cytoplasmic-facing. Residues 528-559 (RQPVPTHPSPSENSSANASIGSTQSTPTSSMA) form a disordered region. Residues 536 to 546 (SPSENSSANAS) show a composition bias toward low complexity. Positions 547-559 (IGSTQSTPTSSMA) are enriched in polar residues.

Homodimer; disulfide-linked.

It localises to the cell membrane. Functionally, vascular endothelium glycoprotein that plays an important role in the regulation of angiogenesis. Required for normal structure and integrity of adult vasculature. Important for endothelial cell shape changes in response to blood flow, which drive vascular remodeling and establishment of normal vascular morphology during angiogenesis. The protein is Endoglin of Danio rerio (Zebrafish).